Here is a 566-residue protein sequence, read N- to C-terminus: MRLTISRKFSLVFLTLILINLLVGGIGVLNMQHIIQKTDEINTKWIDGIKGITSINYVTEHLSSKEKDFLIYTDKSKMDTLDQEMNQIMEDINQKLDNYEKTISTDKEQKLFEQLQTKVNTYMDIHAQIIESGRTNDMDKARGLLVQTEASFEDMKKTITQLVDLNQEGSNTAVKETKAVYHKGLIYTALLVAASILISIFIWLYITRNIVKPIIRMKESANHIAEGDLSNDMEALNSKDELGDLNEALQKMVGNLRDIVGYSKDISSRVLSSSQVLATATNETRSGSKHITETMNEMAEGSEQQAQDAVTIAESMNEFTESIDKAYNHGITISDTSQNVLELAVSGNENMATSLQQMKTIHHIVEEAVHKVRSLEQHSQDINKLVQVINGIAEQTNLLSLNAAIEAARAGESGKGFAVVAEEVRKLADGVSDSVQDITRIVNGTQQEIHTVITYLESSFTEVEKGTENLTDTGQAMQHIKQSVTHVADSIKEVTDGLKQLTNQSITINQSIENIASVSEESAAGIEETFSITEQSAHSMDQVLLNAEELEQLANELNEKMGQFTI.

A signal peptide spans 1–31 (MRLTISRKFSLVFLTLILINLLVGGIGVLNM). Residues 74–110 (DKSKMDTLDQEMNQIMEDINQKLDNYEKTISTDKEQK) are a coiled coil. The chain crosses the membrane as a helical span at residues 186 to 206 (IYTALLVAASILISIFIWLYI). Residues 208–261 (RNIVKPIIRMKESANHIAEGDLSNDMEALNSKDELGDLNEALQKMVGNLRDIVG) enclose the HAMP domain. The Methyl-accepting transducer domain maps to 280–530 (ATNETRSGSK…ESAAGIEETF (251 aa)). Residues 536–566 (SAHSMDQVLLNAEELEQLANELNEKMGQFTI) are a coiled coil.

This sequence belongs to the methyl-accepting chemotaxis (MCP) protein family.

The protein resides in the cell membrane. Functionally, chemotactic-signal transducers respond to changes in the concentration of attractants and repellents in the environment, transduce a signal from the outside to the inside of the cell, and facilitate sensory adaptation through the variation of the level of methylation. Attractants increase the level of methylation while repellents decrease the level of methylation. The sequence is that of Putative sensory transducer protein YvaQ (yvaQ) from Bacillus subtilis (strain 168).